The following is a 149-amino-acid chain: MADQLSEEQISEFKEAFSLFDKDGDGTITTKELGTVMRSLGQNPTEAELQDMINEVDADGNGTIDFPEFLTMMARKMRDTDSEEEIKEAFKVFDKDGNGYISAAELRHVMTNLGEKLTDNEVDEMIREADIDGDGQINYEEFVKMMLSK.

Alanine 2 is subject to N-acetylalanine. 4 EF-hand domains span residues 8 to 43 (EQIS…LGQN), 44 to 79 (PTEA…KMRD), 81 to 116 (DSEE…LGEK), and 117 to 149 (LTDN…MLSK). Ca(2+)-binding residues include aspartate 21, aspartate 23, aspartate 25, threonine 27, glutamate 32, aspartate 57, aspartate 59, asparagine 61, threonine 63, glutamate 68, aspartate 94, aspartate 96, asparagine 98, tyrosine 100, glutamate 105, aspartate 130, aspartate 132, aspartate 134, glutamine 136, and glutamate 141.

This sequence belongs to the calmodulin family. In terms of processing, trimethylation of Lys-116 observed in other calmodulins is absent here.

In terms of biological role, calmodulin mediates the control of a large number of enzymes, ion channels and other proteins by Ca(2+). Among the enzymes to be stimulated by the calmodulin-Ca(2+) complex are a number of protein kinases and phosphatases. The sequence is that of Calmodulin (CMD1) from Pleurotus cornucopiae (Cornucopia mushroom).